Here is a 518-residue protein sequence, read N- to C-terminus: Probable malate:quinone oxidoreductase (518 aa).

The tract at residues 495–518 (GAIPATTDGQSTAGTEHTPTAATV) is disordered. Positions 501-518 (TDGQSTAGTEHTPTAATV) are enriched in polar residues.

The protein belongs to the MQO family. Requires FAD as cofactor.

It catalyses the reaction (S)-malate + a quinone = a quinol + oxaloacetate. It participates in carbohydrate metabolism; tricarboxylic acid cycle; oxaloacetate from (S)-malate (quinone route): step 1/1. In Mycolicibacterium gilvum (strain PYR-GCK) (Mycobacterium gilvum (strain PYR-GCK)), this protein is Probable malate:quinone oxidoreductase.